The sequence spans 311 residues: Ribosomal RNA small subunit methyltransferase H (311 aa).

S-adenosyl-L-methionine-binding positions include 33–35, Asp-53, Phe-80, Asp-101, and Gln-108; that span reads AGH.

The protein belongs to the methyltransferase superfamily. RsmH family.

The protein localises to the cytoplasm. The enzyme catalyses cytidine(1402) in 16S rRNA + S-adenosyl-L-methionine = N(4)-methylcytidine(1402) in 16S rRNA + S-adenosyl-L-homocysteine + H(+). Functionally, specifically methylates the N4 position of cytidine in position 1402 (C1402) of 16S rRNA. The sequence is that of Ribosomal RNA small subunit methyltransferase H from Clostridioides difficile (strain 630) (Peptoclostridium difficile).